A 1938-amino-acid polypeptide reads, in one-letter code: Myosin-6 (1938 aa).

The region spanning 31–80 (DIRTECFVPDDKEEYVKAKIVSREGGKVTAETENGKTVTVKEDQVMQQNP) is the Myosin N-terminal SH3-like domain. Residues 84-779 (DKIEDMAMLT…LLGLLEEMRD (696 aa)) enclose the Myosin motor domain. At Lys-128 the chain carries N6,N6,N6-trimethyllysine. Position 177-184 (177-184 (GESGAGKT)) interacts with ATP. The residue at position 378 (Thr-378) is a Phosphothreonine. Ser-416 carries the phosphoserine modification. 2 actin-binding regions span residues 656–678 (LNKL…IPNE) and 758–772 (KFGH…GLLG). The IQ domain occupies 782–811 (LSRIITRIQAQARGQLMRIEFKKMVERRDA). 2 calmodulin-binding regions span residues 789–806 (IQAQ…KKMV) and 815–832 (IQWN…PWMK). The stretch at 842-1938 (KSAETEKEMA…GAKQKMHDEE (1097 aa)) forms a coiled coil. Phosphoserine is present on residues Ser-1089 and Ser-1138. The residue at position 1260 (Tyr-1260) is a Phosphotyrosine. Phosphoserine is present on Ser-1270. Residues Thr-1276 and Thr-1283 each carry the phosphothreonine modification. Ser-1308 is subject to Phosphoserine. Phosphotyrosine is present on Tyr-1309. Position 1310 is a phosphothreonine (Thr-1310). Residue Ser-1511 is modified to Phosphoserine. Thr-1514 and Thr-1680 each carry phosphothreonine. Positions 1907–1938 (AEERADIAESQVNKLRAKSRDIGAKQKMHDEE) are disordered. Residues 1924 to 1938 (KSRDIGAKQKMHDEE) show a composition bias toward basic and acidic residues.

It belongs to the TRAFAC class myosin-kinesin ATPase superfamily. Myosin family. Muscle myosin is a hexameric protein that consists of 2 heavy chain subunits (MHC), 2 alkali light chain subunits (MLC) and 2 regulatory light chain subunits (MLC-2).

It localises to the cytoplasm. It is found in the myofibril. In terms of biological role, muscle contraction. This is Myosin-6 (Myh6) from Rattus norvegicus (Rat).